Consider the following 464-residue polypeptide: Cerebellar degeneration-related protein 2-like (464 aa).

Coiled-coil stretches lie at residues A31–T154, V201–V264, and M342–Q379. Residues E371 to S419 are disordered. Positions V384 to V395 are enriched in basic and acidic residues. A compositionally biased stretch (pro residues) spans Q399–P409.

Belongs to the CDR2 family.

The sequence is that of Cerebellar degeneration-related protein 2-like (cdr2l) from Danio rerio (Zebrafish).